The following is a 222-amino-acid chain: 7-cyano-7-deazaguanine synthase (222 aa).

14–24 (FSGGQDSTTCL) provides a ligand contact to ATP. Residues Cys-190, Cys-199, Cys-202, and Cys-205 each contribute to the Zn(2+) site.

Belongs to the QueC family. As to quaternary structure, homodimer. Requires Zn(2+) as cofactor.

The catalysed reaction is 7-carboxy-7-deazaguanine + NH4(+) + ATP = 7-cyano-7-deazaguanine + ADP + phosphate + H2O + H(+). The protein operates within purine metabolism; 7-cyano-7-deazaguanine biosynthesis. Functionally, catalyzes the ATP-dependent conversion of 7-carboxy-7-deazaguanine (CDG) to 7-cyano-7-deazaguanine (preQ(0)). The polypeptide is 7-cyano-7-deazaguanine synthase (Staphylococcus aureus (strain Mu3 / ATCC 700698)).